We begin with the raw amino-acid sequence, 134 residues long: Large ribosomal subunit protein bL20 (134 aa).

Belongs to the bacterial ribosomal protein bL20 family.

Functionally, binds directly to 23S ribosomal RNA and is necessary for the in vitro assembly process of the 50S ribosomal subunit. It is not involved in the protein synthesizing functions of that subunit. The polypeptide is Large ribosomal subunit protein bL20 (Rhizobium etli (strain CIAT 652)).